Consider the following 534-residue polypeptide: Autophagy-related protein 20 (534 aa).

Residues 1-21 (MAQDDSYEEKPEVISSDSGGS) form a disordered region. The 137-residue stretch at 1–137 (MAQDDSYEEK…DKFIHSTVSW (137 aa)) folds into the PX domain. A 1,2-diacyl-sn-glycero-3-phospho-(1D-myo-inositol-3-phosphate) is bound by residues Arg-55, Ser-57, Lys-81, and Arg-104. A disordered region spans residues 179–272 (ANSLSPPSSR…NGKDAPSPVL (94 aa)). The span at 203 to 212 (SSLEPSSPLG) shows a compositional bias: low complexity. The span at 245-263 (YNSSPSELSPTQRRSSISN) shows a compositional bias: polar residues.

Belongs to the sorting nexin family.

It localises to the cytoplasm. It is found in the endosome membrane. Its subcellular location is the preautophagosomal structure membrane. Required for cytoplasm to vacuole transport (Cvt), pexophagy and mitophagy. Also involved in endoplasmic reticulum-specific autophagic process and is essential for the survival of cells subjected to severe ER stress. Functions in protein retrieval from the endocytic pathway. In Schizosaccharomyces pombe (strain 972 / ATCC 24843) (Fission yeast), this protein is Autophagy-related protein 20 (atg20).